The primary structure comprises 231 residues: 7-cyano-7-deazaguanine synthase (231 aa).

Position 7–17 (7–17 (LSSGLDSVAAL)) interacts with ATP. Zn(2+) is bound by residues cysteine 195, cysteine 203, cysteine 206, and cysteine 209.

Belongs to the QueC family. Requires Zn(2+) as cofactor.

It carries out the reaction 7-carboxy-7-deazaguanine + NH4(+) + ATP = 7-cyano-7-deazaguanine + ADP + phosphate + H2O + H(+). The protein operates within purine metabolism; 7-cyano-7-deazaguanine biosynthesis. Its function is as follows. Catalyzes the ATP-dependent conversion of 7-carboxy-7-deazaguanine (CDG) to 7-cyano-7-deazaguanine (preQ(0)). In Methanosarcina mazei (strain ATCC BAA-159 / DSM 3647 / Goe1 / Go1 / JCM 11833 / OCM 88) (Methanosarcina frisia), this protein is 7-cyano-7-deazaguanine synthase.